The sequence spans 349 residues: Micronemal protein 6 (349 aa).

The N-terminal stretch at 1 to 23 (MRLFRCCAAAVVAAESLLWLKNG) is a signal peptide. 3 consecutive EGF-like domains span residues 36–80 (IADN…VTCM), 96–134 (TPAA…SLDG), and 147–192 (GCEE…ITCK). Disulfide bonds link Cys40–Cys53, Cys45–Cys62, Cys64–Cys79, Cys100–Cys113, Cys105–Cys122, Cys124–Cys140, Cys148–Cys162, Cys153–Cys173, and Cys175–Cys191. Positions 194-291 (VPPHYRKPPF…EEGSGHAGAI (98 aa)) are disordered. The acidic domain stretch occupies residues 204-283 (EFGKGGHPVD…SEEQGKEREE (80 aa)). Basic and acidic residues-rich tracts occupy residues 210–247 (HPVD…RTPL) and 276–285 (EQGKEREEGS). The chain crosses the membrane as a helical span at residues 290-310 (AIAGGVIGGLLLLSAAGAGVA).

As to quaternary structure, interacts directly with MIC1. Part of the MIC6-MIC1-MIC4 complex. In terms of processing, subject to proteolytic processing involving both the N-terminus and the C-terminus. The first EGF-like domain (EGF-like domain 1) is removed by proteolytic cleavage by ASP3 and is not present in the mature protein. Released as soluble 35 kDa protein after proteolytic processing at the C-terminus.

The protein resides in the cytoplasmic vesicle. Its subcellular location is the secretory vesicle. It is found in the microneme membrane. The protein localises to the secreted. In terms of biological role, escorter protein required for import of MIC1 and MIC4 adhesins into the microneme. The polypeptide is Micronemal protein 6 (Toxoplasma gondii).